A 419-amino-acid polypeptide reads, in one-letter code: Probable pectate lyase C (419 aa).

The first 19 residues, 1–19 (MRLGIALFSLIGLCHSVSA), serve as a signal peptide directing secretion. 3 N-linked (GlcNAc...) asparagine glycosylation sites follow: N48, N164, and N201. Residue R204 is part of the active site. The EF-hand domain maps to 261–296 (NEYFHGYVETNYYDPDRDGTLNGNELGVSASNYGGM). 5 residues coordinate Ca(2+): D274, D276, D278, T280, and E285. Positions 350–395 (ELISDEASMGGPGDLDGGSPPTDSDGDGIPDDAETEIGSDPNTADS) are disordered. Positions 373–386 (SDGDGIPDDAETEI) are enriched in acidic residues.

This sequence belongs to the polysaccharide lyase 1 family. Ca(2+) is required as a cofactor.

It is found in the secreted. The catalysed reaction is Eliminative cleavage of (1-&gt;4)-alpha-D-galacturonan to give oligosaccharides with 4-deoxy-alpha-D-galact-4-enuronosyl groups at their non-reducing ends.. In terms of biological role, pectinolytic enzyme consist of four classes of enzymes: pectin lyase, polygalacturonase, pectin methylesterase and rhamnogalacturonase. Among pectinolytic enzymes, pectin lyase is the most important in depolymerization of pectin, since it cleaves internal glycosidic bonds of highly methylated pectins. Favors pectate, the anion, over pectin, the methyl ester. The sequence is that of Probable pectate lyase C (plyC) from Aspergillus terreus (strain NIH 2624 / FGSC A1156).